The chain runs to 147 residues: UPF0306 protein YhbP (147 aa).

The protein belongs to the UPF0306 family.

This chain is UPF0306 protein YhbP, found in Escherichia coli O17:K52:H18 (strain UMN026 / ExPEC).